A 175-amino-acid polypeptide reads, in one-letter code: Adenine phosphoribosyltransferase (175 aa).

The protein belongs to the purine/pyrimidine phosphoribosyltransferase family. Homodimer.

Its subcellular location is the cytoplasm. The enzyme catalyses AMP + diphosphate = 5-phospho-alpha-D-ribose 1-diphosphate + adenine. It participates in purine metabolism; AMP biosynthesis via salvage pathway; AMP from adenine: step 1/1. In terms of biological role, catalyzes a salvage reaction resulting in the formation of AMP, that is energically less costly than de novo synthesis. The protein is Adenine phosphoribosyltransferase of Nitrosospira multiformis (strain ATCC 25196 / NCIMB 11849 / C 71).